The sequence spans 217 residues: Peptide methionine sulfoxide reductase MsrA (217 aa).

The active site involves cysteine 56.

Belongs to the MsrA Met sulfoxide reductase family.

The enzyme catalyses L-methionyl-[protein] + [thioredoxin]-disulfide + H2O = L-methionyl-(S)-S-oxide-[protein] + [thioredoxin]-dithiol. It catalyses the reaction [thioredoxin]-disulfide + L-methionine + H2O = L-methionine (S)-S-oxide + [thioredoxin]-dithiol. Functionally, has an important function as a repair enzyme for proteins that have been inactivated by oxidation. Catalyzes the reversible oxidation-reduction of methionine sulfoxide in proteins to methionine. The sequence is that of Peptide methionine sulfoxide reductase MsrA from Corynebacterium glutamicum (strain ATCC 13032 / DSM 20300 / JCM 1318 / BCRC 11384 / CCUG 27702 / LMG 3730 / NBRC 12168 / NCIMB 10025 / NRRL B-2784 / 534).